We begin with the raw amino-acid sequence, 391 residues long: Multidrug resistance protein MdtL (391 aa).

At 1–3 the chain is on the cytoplasmic side; sequence MSR. A helical transmembrane segment spans residues 4–24; that stretch reads FLICSFALVLLYPAGIDMYLV. Residues 25–41 lie on the Periplasmic side of the membrane; the sequence is GLPRIAADLNASEAQLH. The chain crosses the membrane as a helical span at residues 42 to 62; sequence IAFSVYLAGMAAAMLFAGKVA. Over 63–68 the chain is Cytoplasmic; it reads DRSGRK. A helical transmembrane segment spans residues 69-89; sequence PVAIPGAALFIIASVFCSLAE. Residues 90–92 are Periplasmic-facing; that stretch reads TST. A helical membrane pass occupies residues 93-113; that stretch reads LFLAGRFLQGLGAGCCYVVAF. Residues 114-130 lie on the Cytoplasmic side of the membrane; sequence AILRDTLDDRRRAKVLS. The helical transmembrane segment at 131–151 threads the bilayer; that stretch reads LLNGITCIIPVLAPVLGHLIM. The Periplasmic segment spans residues 152 to 157; that stretch reads LKFPWQ. A helical membrane pass occupies residues 158-178; that stretch reads SLFWAMAMMGIAVLMLSLFIL. Over 179-202 the chain is Cytoplasmic; that stretch reads KETRPASPAASDKPRENSESLLNR. The chain crosses the membrane as a helical span at residues 203–222; that stretch reads FFLSRVVITTLSVSVILTFV. The Periplasmic segment spans residues 223-244; that stretch reads NTSPVLLMEIMGFERGEYATIM. The chain crosses the membrane as a helical span at residues 245–265; that stretch reads ALTAGVSMTFSFSTPFALGIF. Residues 266-268 lie on the Cytoplasmic side of the membrane; the sequence is KPR. Residues 269–289 traverse the membrane as a helical segment; the sequence is TLMITSQVLFLAAGITLAVSP. Topologically, residues 290-292 are periplasmic; sequence SHA. Residues 293–313 traverse the membrane as a helical segment; the sequence is VSLFGITLICAGFSVGFGVAM. The Cytoplasmic segment spans residues 314–330; the sequence is SQALGPFSLRAGVASST. Residues 331-351 traverse the membrane as a helical segment; that stretch reads LGIAQVCGSSLWIWLAAVVGI. Residues 352-355 lie on the Periplasmic side of the membrane; the sequence is GAWN. The chain crosses the membrane as a helical span at residues 356–376; sequence MLIGILIACSIVSLLLIMFVA. Residues 377–391 are Cytoplasmic-facing; it reads PGRPVAAHEEIHHHA.

This sequence belongs to the major facilitator superfamily. DHA1 family. MdtL (TC 2.A.1.2.22) subfamily.

The protein localises to the cell inner membrane. The protein is Multidrug resistance protein MdtL (mdtL) of Shigella flexneri.